The primary structure comprises 476 residues: Ribulose bisphosphate carboxylase/oxygenase activase 1, chloroplastic (476 aa).

Residues 1-56 (MAAAYSTVGAVNRAPLSLNGSGARASLVPSTAFFGSSLKKSAAKFPKASSGNFKIV) constitute a chloroplast transit peptide. 165–172 (GGKGQGKS) contributes to the ATP binding site.

This sequence belongs to the RuBisCO activase family.

It is found in the plastid. It localises to the chloroplast stroma. Functionally, activation of RuBisCO (ribulose-1,5-bisphosphate carboxylase/oxygenase; EC 4.1.1.39) involves the ATP-dependent carboxylation of the epsilon-amino group of lysine leading to a carbamate structure. The polypeptide is Ribulose bisphosphate carboxylase/oxygenase activase 1, chloroplastic (RCA1) (Larrea tridentata (Creosote bush)).